Here is a 238-residue protein sequence, read N- to C-terminus: LexA repressor (238 aa).

Residues 26-46 (FDEMKDALDLASKSGIHRLIT) constitute a DNA-binding region (H-T-H motif). Active-site for autocatalytic cleavage activity residues include Ser-158 and Lys-196.

The protein belongs to the peptidase S24 family. In terms of assembly, homodimer.

The catalysed reaction is Hydrolysis of Ala-|-Gly bond in repressor LexA.. Its function is as follows. Represses a number of genes involved in the response to DNA damage (SOS response), including recA and lexA. In the presence of single-stranded DNA, RecA interacts with LexA causing an autocatalytic cleavage which disrupts the DNA-binding part of LexA, leading to derepression of the SOS regulon and eventually DNA repair. This chain is LexA repressor, found in Sinorhizobium medicae (strain WSM419) (Ensifer medicae).